The sequence spans 63 residues: Large ribosomal subunit protein bL32 (63 aa).

Residues 1 to 23 form a disordered region; sequence MATPKAKVSKSRRDKRRAQFTAR. Positions 7–18 are enriched in basic residues; the sequence is KVSKSRRDKRRA.

It belongs to the bacterial ribosomal protein bL32 family.

The polypeptide is Large ribosomal subunit protein bL32 (Prosthecochloris aestuarii (strain DSM 271 / SK 413)).